A 109-amino-acid polypeptide reads, in one-letter code: Nucleoid-associated protein BCE_0021 (109 aa).

The protein belongs to the YbaB/EbfC family. Homodimer.

Its subcellular location is the cytoplasm. The protein resides in the nucleoid. Functionally, binds to DNA and alters its conformation. May be involved in regulation of gene expression, nucleoid organization and DNA protection. This Bacillus cereus (strain ATCC 10987 / NRS 248) protein is Nucleoid-associated protein BCE_0021.